Here is a 132-residue protein sequence, read N- to C-terminus: Fatty acid-binding protein type 2 (132 aa).

Alanine 2 is modified (N-acetylalanine).

It belongs to the calycin superfamily. Fatty-acid binding protein (FABP) family.

The sequence is that of Fatty acid-binding protein type 2 from Fasciola hepatica (Liver fluke).